Here is a 307-residue protein sequence, read N- to C-terminus: Porphobilinogen deaminase (307 aa).

Residue cysteine 239 is modified to S-(dipyrrolylmethanemethyl)cysteine.

The protein belongs to the HMBS family. As to quaternary structure, monomer. Dipyrromethane is required as a cofactor.

It catalyses the reaction 4 porphobilinogen + H2O = hydroxymethylbilane + 4 NH4(+). It functions in the pathway porphyrin-containing compound metabolism; protoporphyrin-IX biosynthesis; coproporphyrinogen-III from 5-aminolevulinate: step 2/4. Its function is as follows. Tetrapolymerization of the monopyrrole PBG into the hydroxymethylbilane pre-uroporphyrinogen in several discrete steps. The chain is Porphobilinogen deaminase from Campylobacter jejuni subsp. doylei (strain ATCC BAA-1458 / RM4099 / 269.97).